A 154-amino-acid polypeptide reads, in one-letter code: Keratin-associated protein 9-4 (154 aa).

A run of 15 repeats spans residues 8–12 (CCQPT), 13–17 (CCRTT), 18–22 (CCRTT), 37–41 (CCQPS), 42–46 (CCVSS), 51–55 (CCRPT), 56–60 (CCQNT), 61–65 (CCQPT), 70–74 (CCQPS), 75–79 (CCSTP), 80–84 (CCQPT), 85–89 (CCGSS), 129–133 (CCRPA), 134–138 (CCETT), and 148–152 (CCQPF). The 15 X 5 AA repeats of C-C-[RQVGE]-[SPTN]-[TASPF] stretch occupies residues 8 to 152 (CCQPTCCRTT…TCVSSCCQPF (145 aa)).

This sequence belongs to the KRTAP type 9 family. In terms of assembly, interacts with hair keratins.

In the hair cortex, hair keratin intermediate filaments are embedded in an interfilamentous matrix, consisting of hair keratin-associated proteins (KRTAP), which are essential for the formation of a rigid and resistant hair shaft through their extensive disulfide bond cross-linking with abundant cysteine residues of hair keratins. The matrix proteins include the high-sulfur and high-glycine-tyrosine keratins. The chain is Keratin-associated protein 9-4 (KRTAP9-4) from Homo sapiens (Human).